We begin with the raw amino-acid sequence, 166 residues long: S-phase kinase-associated protein 1 homolog (166 aa).

Positions 105-166 are interaction with the F-box domain of F-box proteins; the sequence is ILAANYLDIK…ENKWAEEATS (62 aa).

Belongs to the SKP1 family. Component of multiple SCF (SKP1-CUL1-F-box) E3 ubiquitin-protein ligase complexes formed of CUL1, SKP1, RBX1 and a variable F-box domain-containing protein as substrate-specific subunit.

The protein operates within protein modification; protein ubiquitination. In terms of biological role, essential component of the SCF (SKP1-CUL1-F-box protein) ubiquitin ligase complex, which mediates the ubiquitination of proteins involved in cell cycle progression, signal transduction and transcription. In the SCF complex, serves as an adapter that links the F-box protein to CUL1. The functional specificity of the SCF complex depends on the F-box protein as substrate recognition component. Its association with the holoenzyme telomerase ribonucleoprotein complex suggests that it may play a role in turnover of holoenzyme telomerase complex components. In Tetrahymena thermophila (strain SB210), this protein is S-phase kinase-associated protein 1 homolog.